Consider the following 405-residue polypeptide: Dihydrolipoyllysine-residue succinyltransferase component of 2-oxoglutarate dehydrogenase complex (405 aa).

The region spanning 3–78 (SVDILVPDLP…TSRQILGRLR (76 aa)) is the Lipoyl-binding domain. N6-lipoyllysine is present on K44. The tract at residues 75-111 (GRLREGNSAGKETSAKSEEKASTPAQRQQASLEEQNN) is disordered. The span at 97–111 (TPAQRQQASLEEQNN) shows a compositional bias: polar residues. The region spanning 113 to 150 (ALSPAIRRLLAEHNLDASAIKGTGVGGRLTREDVEKHL) is the Peripheral subunit-binding (PSBD) domain. Residue K148 is modified to N6-acetyllysine. Low complexity predominate over residues 153 to 173 (APAKESAPAAAAPAAQPALAA). Residues 153 to 178 (APAKESAPAAAAPAAQPALAARSEKR) form a disordered region. Active-site residues include H376 and D380.

It belongs to the 2-oxoacid dehydrogenase family. As to quaternary structure, forms a 24-polypeptide structural core with octahedral symmetry. Part of the 2-oxoglutarate dehydrogenase (OGDH) complex composed of E1 (2-oxoglutarate dehydrogenase), E2 (dihydrolipoamide succinyltransferase) and E3 (dihydrolipoamide dehydrogenase); the complex contains multiple copies of the three enzymatic components (E1, E2 and E3). Interacts with SucA (via N-terminus), the E1 component of OGDH complex. (R)-lipoate is required as a cofactor.

It catalyses the reaction N(6)-[(R)-dihydrolipoyl]-L-lysyl-[protein] + succinyl-CoA = N(6)-[(R)-S(8)-succinyldihydrolipoyl]-L-lysyl-[protein] + CoA. It functions in the pathway amino-acid degradation; L-lysine degradation via saccharopine pathway; glutaryl-CoA from L-lysine: step 6/6. Functionally, E2 component of the 2-oxoglutarate dehydrogenase (OGDH) complex which catalyzes the second step in the conversion of 2-oxoglutarate to succinyl-CoA and CO(2). This chain is Dihydrolipoyllysine-residue succinyltransferase component of 2-oxoglutarate dehydrogenase complex (sucB), found in Escherichia coli O157:H7.